A 362-amino-acid polypeptide reads, in one-letter code: Dihydroorotate dehydrogenase (quinone) (362 aa).

Residues 60 to 64 and T84 each bind FMN; that span reads AGFDK. Position 64 (K64) interacts with substrate. 109–113 lines the substrate pocket; sequence NRMGF. Positions 137 and 168 each coordinate FMN. N168 is a binding site for substrate. Catalysis depends on S171, which acts as the Nucleophile. N173 is a binding site for substrate. K213 and S241 together coordinate FMN. 242-243 provides a ligand contact to substrate; it reads NT. Residues G264, G293, and 314 to 315 contribute to the FMN site; that span reads YS.

The protein belongs to the dihydroorotate dehydrogenase family. Type 2 subfamily. In terms of assembly, monomer. FMN is required as a cofactor.

It is found in the cell membrane. The enzyme catalyses (S)-dihydroorotate + a quinone = orotate + a quinol. It participates in pyrimidine metabolism; UMP biosynthesis via de novo pathway; orotate from (S)-dihydroorotate (quinone route): step 1/1. In terms of biological role, catalyzes the conversion of dihydroorotate to orotate with quinone as electron acceptor. This Bartonella henselae (strain ATCC 49882 / DSM 28221 / CCUG 30454 / Houston 1) (Rochalimaea henselae) protein is Dihydroorotate dehydrogenase (quinone).